We begin with the raw amino-acid sequence, 473 residues long: Cysteine--tRNA ligase (473 aa).

Residue C33 coordinates Zn(2+). A 'HIGH' region motif is present at residues 35–45; the sequence is ATVQGQPHIGH. Zn(2+)-binding residues include C211, H236, and E240. Positions 267–271 match the 'KMSKS' region motif; sequence KMSKS. K270 provides a ligand contact to ATP.

It belongs to the class-I aminoacyl-tRNA synthetase family. In terms of assembly, monomer. Zn(2+) is required as a cofactor.

The protein resides in the cytoplasm. The enzyme catalyses tRNA(Cys) + L-cysteine + ATP = L-cysteinyl-tRNA(Cys) + AMP + diphosphate. The polypeptide is Cysteine--tRNA ligase (Mycobacterium leprae (strain Br4923)).